A 341-amino-acid chain; its full sequence is Transmembrane protein 120A-A (341 aa).

At 1-131 (MLFNPTGLTE…KQSKFAYKDE (131 aa)) the chain is on the cytoplasmic side. Position 129 (Lys129) interacts with CoA. A helical transmembrane segment spans residues 132–151 (YEKFKLYLTVLLLFFSFTCR). The Extracellular portion of the chain corresponds to 152–157 (FLVSYR). A helical membrane pass occupies residues 158–176 (VVDALFNFLLVWYYCTLTI). At 177–189 (RESILINNGSKIK) the chain is on the cytoplasmic side. CoA contacts are provided by Ser186 and Lys187. Residues 190–208 (GWWVFQHYVSTFLSGVMLT) form a helical membrane-spanning segment. The Extracellular portion of the chain corresponds to 209–217 (WPDGELYQM). Residues 218-239 (FRNQFLSYSMYINFVQFFQYYY) traverse the membrane as a helical segment. Positions 236, 239, 240, and 282 each coordinate CoA. The Cytoplasmic segment spans residues 240–269 (QSGCLYRLRALGERHNMDLTVEGFQSWMWR). A helical membrane pass occupies residues 270-293 (GLTFLLPFLFLGHFFQLYNGITLF). Residues 294 to 303 (QMTQLPEWKE) lie on the Extracellular side of the membrane. Residues 304–329 (WQVLMCGSTFLVLFMGNFFTTLGVVY) traverse the membrane as a helical segment. The Cytoplasmic segment spans residues 330 to 341 (HKYMDQDKAKGL). Residue Lys331 participates in CoA binding.

The protein belongs to the TMEM120 family. In terms of assembly, homodimer.

Its subcellular location is the cell membrane. It is found in the nucleus inner membrane. The protein localises to the endoplasmic reticulum. In terms of biological role, multifunctional protein involved in mechanosensation, and plays an essential role in lipid metabolism. May function as a potential ion channel involved in sensing mechanical stimuli. TMEM120A is structurally similar to a lipid-modifying enzyme, ELOVL7, and contains a bound coenzyme A molecule, which suggests it might function as an enzyme in lipid metabolism. The sequence is that of Transmembrane protein 120A-A (tmem120aa) from Danio rerio (Zebrafish).